The sequence spans 266 residues: Ribonuclease HII (266 aa).

Residues 73–266 (SPVAGVDEAG…NCGSRQKCEG (194 aa)) enclose the RNase H type-2 domain. A divalent metal cation contacts are provided by D79, E80, and D173.

Belongs to the RNase HII family. It depends on Mn(2+) as a cofactor. Mg(2+) is required as a cofactor.

Its subcellular location is the cytoplasm. The enzyme catalyses Endonucleolytic cleavage to 5'-phosphomonoester.. In terms of biological role, endonuclease that specifically degrades the RNA of RNA-DNA hybrids. This Pelotomaculum thermopropionicum (strain DSM 13744 / JCM 10971 / SI) protein is Ribonuclease HII.